Reading from the N-terminus, the 345-residue chain is MSTSKRKIDHLKICLEEEVESGYTGLEDVMLIHKALPEVDYWKIDTEIEFFGKKLSFPLLIASMTGGHPETKEINARLGEAVEEAGIGMGVGSQRAAIEDESLADSFTVVREKAPNAFVYANIGMPQVIERGVEIVDRAVEMIDADAVAIHLNYLQEAIQPEGDLNAEKGLEVLEEVCRSVKVPVIAKETGAGISREVAVMLKRAGVSAIDVGGKGGTTFSGVEVYRVNDEVSKSVGIDFWDWGLPTAFSIVDCRGILPVIATGGLRSGLDVAKSIAIGAELGSAALPFLRAAVESAEKVREEIEYFRRGLKTAMFLTGCKNVEELKGLKVFVSGRLKEWIDFRG.

Position 6-7 (6-7 (RK)) interacts with substrate. FMN is bound by residues 63-65 (SMT), Ser-93, and Asn-122. 93–95 (SQR) is a binding site for substrate. Gln-156 is a substrate binding site. Glu-157 is a binding site for Mg(2+). Residues Lys-188, Thr-218, 265 to 267 (GLR), and 286 to 287 (AL) contribute to the FMN site.

Belongs to the IPP isomerase type 2 family. Homooctamer. Dimer of tetramers. It depends on FMN as a cofactor. The cofactor is NADPH. Mg(2+) serves as cofactor.

The protein localises to the cytoplasm. It carries out the reaction isopentenyl diphosphate = dimethylallyl diphosphate. In terms of biological role, involved in the biosynthesis of isoprenoids. Catalyzes the 1,3-allylic rearrangement of the homoallylic substrate isopentenyl (IPP) to its allylic isomer, dimethylallyl diphosphate (DMAPP). This chain is Isopentenyl-diphosphate delta-isomerase, found in Archaeoglobus fulgidus (strain ATCC 49558 / DSM 4304 / JCM 9628 / NBRC 100126 / VC-16).